The primary structure comprises 156 residues: Transcription antitermination protein NusB (156 aa).

The protein belongs to the NusB family.

In terms of biological role, involved in transcription antitermination. Required for transcription of ribosomal RNA (rRNA) genes. Binds specifically to the boxA antiterminator sequence of the ribosomal RNA (rrn) operons. The sequence is that of Transcription antitermination protein NusB from Syntrophotalea carbinolica (strain DSM 2380 / NBRC 103641 / GraBd1) (Pelobacter carbinolicus).